A 434-amino-acid polypeptide reads, in one-letter code: Serine--tRNA ligase (434 aa).

Residue Thr-237–Glu-239 participates in L-serine binding. Arg-268–Glu-270 is an ATP binding site. L-serine is bound at residue Glu-291. Glu-358–Ser-361 serves as a coordination point for ATP. An L-serine-binding site is contributed by Ser-393.

Belongs to the class-II aminoacyl-tRNA synthetase family. Type-1 seryl-tRNA synthetase subfamily. Homodimer. The tRNA molecule binds across the dimer.

It is found in the cytoplasm. It catalyses the reaction tRNA(Ser) + L-serine + ATP = L-seryl-tRNA(Ser) + AMP + diphosphate + H(+). The enzyme catalyses tRNA(Sec) + L-serine + ATP = L-seryl-tRNA(Sec) + AMP + diphosphate + H(+). Its pathway is aminoacyl-tRNA biosynthesis; selenocysteinyl-tRNA(Sec) biosynthesis; L-seryl-tRNA(Sec) from L-serine and tRNA(Sec): step 1/1. Functionally, catalyzes the attachment of serine to tRNA(Ser). Is also able to aminoacylate tRNA(Sec) with serine, to form the misacylated tRNA L-seryl-tRNA(Sec), which will be further converted into selenocysteinyl-tRNA(Sec). In Rhodopseudomonas palustris (strain ATCC BAA-98 / CGA009), this protein is Serine--tRNA ligase.